The chain runs to 78 residues: Acyl carrier protein (78 aa).

The region spanning Ser2–Ala77 is the Carrier domain. An O-(pantetheine 4'-phosphoryl)serine modification is found at Ser37.

Belongs to the acyl carrier protein (ACP) family. Post-translationally, 4'-phosphopantetheine is transferred from CoA to a specific serine of apo-ACP by AcpS. This modification is essential for activity because fatty acids are bound in thioester linkage to the sulfhydryl of the prosthetic group.

The protein localises to the cytoplasm. The protein operates within lipid metabolism; fatty acid biosynthesis. Functionally, carrier of the growing fatty acid chain in fatty acid biosynthesis. The protein is Acyl carrier protein of Bacteroides fragilis (strain ATCC 25285 / DSM 2151 / CCUG 4856 / JCM 11019 / LMG 10263 / NCTC 9343 / Onslow / VPI 2553 / EN-2).